The following is a 461-amino-acid chain: RCC1-like G exchanging factor-like protein (461 aa).

A compositionally biased stretch (low complexity) spans 1–10; it reads MLAAARALRG. The N-terminal 34 residues, 1 to 34, are a transit peptide targeting the mitochondrion; it reads MLAAARALRGPRPRWPTPAREHWTPAGRSRSRRE. Residues 1 to 35 are disordered; the sequence is MLAAARALRGPRPRWPTPAREHWTPAGRSRSRREA. 7 RCC1 repeats span residues 55–121, 125–188, 190–244, 245–297, 298–350, 352–408, and 409–458; these read ADRV…LSSK, VTKV…VLTD, EGVF…FLTD, KGEV…ALSA, DGGV…VLNA, GHVF…ALTN, and KGEL…TLAK.

In terms of assembly, forms a regulatory protein-RNA complex, consisting of RCC1L, NGRN, RPUSD3, RPUSD4, TRUB2, FASTKD2 and 16S mt-rRNA. Interacts with 16S mt-rRNA; this interaction is direct. Interacts with OPA1; this interaction is direct. As to expression, at E8.5, broadly expressed in yolk sac placenta, decidua, and embryo, with highest levels found in the trophoblast giant cells (TGCs) and ectoplacental cone (at protein level).

It localises to the mitochondrion inner membrane. Its function is as follows. Guanine nucleotide exchange factor (GEF) for mitochondrial dynamin-related GTPase OPA1. Activates OPA1, by exchanging bound GDP for free GTP, and drives OPA1 and MFN1-dependent mitochondrial fusion. Plays an essential role in mitochondrial ribosome biogenesis. As a component of a functional protein-RNA module, consisting of RCC1L, NGRN, RPUSD3, RPUSD4, TRUB2, FASTKD2 and 16S mitochondrial ribosomal RNA (16S mt-rRNA), controls 16S mt-rRNA abundance and is required for intra-mitochondrial translation of core subunits of the oxidative phosphorylation system. This is RCC1-like G exchanging factor-like protein from Mus musculus (Mouse).